Here is a 547-residue protein sequence, read N- to C-terminus: Chaperonin GroEL 1 (547 aa).

ATP contacts are provided by residues 30–33 (TLGP), Lys-51, 87–91 (DGTTT), Gly-415, and Asp-494. The interval 524–547 (PKGKAKGGGAGAGMPDYGGDDMDY) is disordered.

It belongs to the chaperonin (HSP60) family. As to quaternary structure, forms a cylinder of 14 subunits composed of two heptameric rings stacked back-to-back. Interacts with the co-chaperonin GroES.

The protein localises to the cytoplasm. It carries out the reaction ATP + H2O + a folded polypeptide = ADP + phosphate + an unfolded polypeptide.. Its function is as follows. Together with its co-chaperonin GroES, plays an essential role in assisting protein folding. The GroEL-GroES system forms a nano-cage that allows encapsulation of the non-native substrate proteins and provides a physical environment optimized to promote and accelerate protein folding. The chain is Chaperonin GroEL 1 from Myxococcus xanthus (strain DK1622).